Reading from the N-terminus, the 378-residue chain is Carbamoyl phosphate synthase small chain (378 aa).

The tract at residues 1-189 (MTKPAILALA…DSHPTIDAAD (189 aa)) is CPSase. 3 residues coordinate L-glutamine: Ser-47, Gly-241, and Gly-243. Residues 193 to 378 (HVVAFDYGVK…RFTDAMAKRR (186 aa)) form the Glutamine amidotransferase type-1 domain. Cys-269 functions as the Nucleophile in the catalytic mechanism. Residues Leu-270, Gln-273, Asn-311, Gly-313, and Phe-314 each contribute to the L-glutamine site. Catalysis depends on residues His-353 and Glu-355.

It belongs to the CarA family. In terms of assembly, composed of two chains; the small (or glutamine) chain promotes the hydrolysis of glutamine to ammonia, which is used by the large (or ammonia) chain to synthesize carbamoyl phosphate. Tetramer of heterodimers (alpha,beta)4.

It carries out the reaction hydrogencarbonate + L-glutamine + 2 ATP + H2O = carbamoyl phosphate + L-glutamate + 2 ADP + phosphate + 2 H(+). It catalyses the reaction L-glutamine + H2O = L-glutamate + NH4(+). Its pathway is amino-acid biosynthesis; L-arginine biosynthesis; carbamoyl phosphate from bicarbonate: step 1/1. It functions in the pathway pyrimidine metabolism; UMP biosynthesis via de novo pathway; (S)-dihydroorotate from bicarbonate: step 1/3. Functionally, small subunit of the glutamine-dependent carbamoyl phosphate synthetase (CPSase). CPSase catalyzes the formation of carbamoyl phosphate from the ammonia moiety of glutamine, carbonate, and phosphate donated by ATP, constituting the first step of 2 biosynthetic pathways, one leading to arginine and/or urea and the other to pyrimidine nucleotides. The small subunit (glutamine amidotransferase) binds and cleaves glutamine to supply the large subunit with the substrate ammonia. The sequence is that of Carbamoyl phosphate synthase small chain from Pseudomonas putida (strain ATCC 47054 / DSM 6125 / CFBP 8728 / NCIMB 11950 / KT2440).